Consider the following 194-residue polypeptide: Holliday junction branch migration complex subunit RuvA (194 aa).

The interval 1-64 (MIAYIQGSIT…QDAHTLYGFS (64 aa)) is domain I. The interval 65–143 (TIEEKQCFLQ…KVGNMLSLQP (79 aa)) is domain II. Residues 144–150 (SGQEAIY) are flexible linker. Positions 150–194 (YQEALAALSKLGIHKSTAEKTVAAILKEHQGEITVESLIKLALKG) are domain III.

The protein belongs to the RuvA family. In terms of assembly, homotetramer. Forms an RuvA(8)-RuvB(12)-Holliday junction (HJ) complex. HJ DNA is sandwiched between 2 RuvA tetramers; dsDNA enters through RuvA and exits via RuvB. An RuvB hexamer assembles on each DNA strand where it exits the tetramer. Each RuvB hexamer is contacted by two RuvA subunits (via domain III) on 2 adjacent RuvB subunits; this complex drives branch migration. In the full resolvosome a probable DNA-RuvA(4)-RuvB(12)-RuvC(2) complex forms which resolves the HJ.

The protein localises to the cytoplasm. In terms of biological role, the RuvA-RuvB-RuvC complex processes Holliday junction (HJ) DNA during genetic recombination and DNA repair, while the RuvA-RuvB complex plays an important role in the rescue of blocked DNA replication forks via replication fork reversal (RFR). RuvA specifically binds to HJ cruciform DNA, conferring on it an open structure. The RuvB hexamer acts as an ATP-dependent pump, pulling dsDNA into and through the RuvAB complex. HJ branch migration allows RuvC to scan DNA until it finds its consensus sequence, where it cleaves and resolves the cruciform DNA. In Amoebophilus asiaticus (strain 5a2), this protein is Holliday junction branch migration complex subunit RuvA.